We begin with the raw amino-acid sequence, 244 residues long: Lipoprotein-releasing system ATP-binding protein LolD (244 aa).

Residues 19–244 (IRAEALAKTY…KLRELAPSAV (226 aa)) form the ABC transporter domain. 55–62 (GASGAGKS) lines the ATP pocket.

Belongs to the ABC transporter superfamily. Lipoprotein translocase (TC 3.A.1.125) family. In terms of assembly, the complex is composed of two ATP-binding proteins (LolD) and two transmembrane proteins (LolC and LolE).

It localises to the cell inner membrane. In terms of biological role, part of the ABC transporter complex LolCDE involved in the translocation of mature outer membrane-directed lipoproteins, from the inner membrane to the periplasmic chaperone, LolA. Responsible for the formation of the LolA-lipoprotein complex in an ATP-dependent manner. The protein is Lipoprotein-releasing system ATP-binding protein LolD of Xanthomonas euvesicatoria pv. vesicatoria (strain 85-10) (Xanthomonas campestris pv. vesicatoria).